Consider the following 402-residue polypeptide: Multidrug resistance protein MdtH (402 aa).

Residues Met1 to Lys12 are Cytoplasmic-facing. A helical membrane pass occupies residues Tyr13–Ile33. Residues Ser34–Glu98 lie on the Periplasmic side of the membrane. The chain crosses the membrane as a helical span at residues Pro99–Phe116. At Asp117–Ser138 the chain is on the cytoplasmic side. The chain crosses the membrane as a helical span at residues Leu139 to Leu159. The Periplasmic segment spans residues Gln160–Arg164. The chain crosses the membrane as a helical span at residues Leu165 to Leu185. Over Pro186–Tyr213 the chain is Cytoplasmic. Residues Val214–Met234 form a helical membrane-spanning segment. Residues Val235 to Ser243 are Periplasmic-facing. A helical transmembrane segment spans residues Ala244–Ala264. The Cytoplasmic portion of the chain corresponds to Arg265 to Arg276. Residues Leu277–Leu297 form a helical membrane-spanning segment. The Periplasmic segment spans residues Gln298–Gln299. A helical transmembrane segment spans residues Leu300–Thr320. Over Leu321 to Arg339 the chain is Cytoplasmic. Residues Leu340–Gly360 form a helical membrane-spanning segment. Residues Lys361–Glu367 are Periplasmic-facing. A helical membrane pass occupies residues Leu368–Phe388. At Ser389–Ala402 the chain is on the cytoplasmic side.

This sequence belongs to the major facilitator superfamily. DHA1 family. MdtH (TC 2.A.1.2.21) subfamily.

Its subcellular location is the cell inner membrane. The chain is Multidrug resistance protein MdtH from Shigella sonnei (strain Ss046).